The primary structure comprises 404 residues: Tryptophan synthase beta chain (404 aa).

Lysine 99 bears the N6-(pyridoxal phosphate)lysine mark.

It belongs to the TrpB family. Tetramer of two alpha and two beta chains. Pyridoxal 5'-phosphate is required as a cofactor.

It catalyses the reaction (1S,2R)-1-C-(indol-3-yl)glycerol 3-phosphate + L-serine = D-glyceraldehyde 3-phosphate + L-tryptophan + H2O. Its pathway is amino-acid biosynthesis; L-tryptophan biosynthesis; L-tryptophan from chorismate: step 5/5. The beta subunit is responsible for the synthesis of L-tryptophan from indole and L-serine. This Rhizobium rhizogenes (strain K84 / ATCC BAA-868) (Agrobacterium radiobacter) protein is Tryptophan synthase beta chain.